We begin with the raw amino-acid sequence, 377 residues long: Probable multidrug ABC transporter permease YbhS (377 aa).

Over methionine 1–serine 28 the chain is Cytoplasmic. Residues tryptophan 29 to leucine 49 traverse the membrane as a helical segment. Residues aspartate 50–histidine 181 lie on the Periplasmic side of the membrane. Residues isoleucine 145–arginine 375 enclose the ABC transmembrane type-2 domain. Residues phenylalanine 182 to leucine 202 form a helical membrane-spanning segment. At valine 203–tyrosine 234 the chain is on the cytoplasmic side. The helical transmembrane segment at tyrosine 235–valine 255 threads the bilayer. The Periplasmic portion of the chain corresponds to proline 256 to leucine 261. A helical membrane pass occupies residues leucine 262–isoleucine 282. Topologically, residues serine 283–asparagine 291 are cytoplasmic. The helical transmembrane segment at alanine 292–phenylalanine 312 threads the bilayer. Over glutamine 313–asparagine 345 the chain is Periplasmic. Residues isoleucine 346–glycine 366 traverse the membrane as a helical segment. The Cytoplasmic portion of the chain corresponds to leucine 367–aspartate 377.

This sequence belongs to the ABC-2 integral membrane protein family. As to quaternary structure, the complex is probably composed of two ATP-binding proteins (YbhF) and two transmembrane proteins (YbhR and YbhS).

It localises to the cell inner membrane. In terms of biological role, part of the ABC transporter complex YbhFSR that could be involved in efflux of cefoperazone. Probably involved in the translocation of the substrate across the membrane. The sequence is that of Probable multidrug ABC transporter permease YbhS (ybhS) from Escherichia coli O157:H7.